We begin with the raw amino-acid sequence, 204 residues long: MRVLGIDPGLTRCGVGVVEGVAGRPLTMIGVGVVRTSSDAELGDRLVAVERGIEQWLDEHSPGYVAVERVFAQHNVRTVMGTAQASAVAMLCAARRGIPVALHTPSEVKAAVTGSGRADKAQVGAMVTRLLRLDAPPKPADAADALALAICHIWRAPAQNRLQQAVAAHRTSGASRTPGAAGTPGPSRTPGAPGTSRTLKGRTA.

Catalysis depends on residues Asp7, Glu68, and Asp141. Mg(2+)-binding residues include Asp7, Glu68, and Asp141. The tract at residues 164-204 is disordered; that stretch reads QAVAAHRTSGASRTPGAAGTPGPSRTPGAPGTSRTLKGRTA.

The protein belongs to the RuvC family. As to quaternary structure, homodimer which binds Holliday junction (HJ) DNA. The HJ becomes 2-fold symmetrical on binding to RuvC with unstacked arms; it has a different conformation from HJ DNA in complex with RuvA. In the full resolvosome a probable DNA-RuvA(4)-RuvB(12)-RuvC(2) complex forms which resolves the HJ. It depends on Mg(2+) as a cofactor.

The protein resides in the cytoplasm. The catalysed reaction is Endonucleolytic cleavage at a junction such as a reciprocal single-stranded crossover between two homologous DNA duplexes (Holliday junction).. In terms of biological role, the RuvA-RuvB-RuvC complex processes Holliday junction (HJ) DNA during genetic recombination and DNA repair. Endonuclease that resolves HJ intermediates. Cleaves cruciform DNA by making single-stranded nicks across the HJ at symmetrical positions within the homologous arms, yielding a 5'-phosphate and a 3'-hydroxyl group; requires a central core of homology in the junction. The consensus cleavage sequence is 5'-(A/T)TT(C/G)-3'. Cleavage occurs on the 3'-side of the TT dinucleotide at the point of strand exchange. HJ branch migration catalyzed by RuvA-RuvB allows RuvC to scan DNA until it finds its consensus sequence, where it cleaves and resolves the cruciform DNA. The chain is Crossover junction endodeoxyribonuclease RuvC from Streptomyces griseus subsp. griseus (strain JCM 4626 / CBS 651.72 / NBRC 13350 / KCC S-0626 / ISP 5235).